The sequence spans 237 residues: Thiamine-phosphate synthase (237 aa).

Residues glutamine 57–lysine 61 and asparagine 98 each bind 4-amino-2-methyl-5-(diphosphooxymethyl)pyrimidine. Positions 99 and 118 each coordinate Mg(2+). Serine 136 contacts 4-amino-2-methyl-5-(diphosphooxymethyl)pyrimidine. Threonine 162 to threonine 164 serves as a coordination point for 2-[(2R,5Z)-2-carboxy-4-methylthiazol-5(2H)-ylidene]ethyl phosphate. Lysine 165 is a 4-amino-2-methyl-5-(diphosphooxymethyl)pyrimidine binding site. Glycine 193 contacts 2-[(2R,5Z)-2-carboxy-4-methylthiazol-5(2H)-ylidene]ethyl phosphate.

Belongs to the thiamine-phosphate synthase family. Mg(2+) is required as a cofactor.

It catalyses the reaction 2-[(2R,5Z)-2-carboxy-4-methylthiazol-5(2H)-ylidene]ethyl phosphate + 4-amino-2-methyl-5-(diphosphooxymethyl)pyrimidine + 2 H(+) = thiamine phosphate + CO2 + diphosphate. The catalysed reaction is 2-(2-carboxy-4-methylthiazol-5-yl)ethyl phosphate + 4-amino-2-methyl-5-(diphosphooxymethyl)pyrimidine + 2 H(+) = thiamine phosphate + CO2 + diphosphate. It carries out the reaction 4-methyl-5-(2-phosphooxyethyl)-thiazole + 4-amino-2-methyl-5-(diphosphooxymethyl)pyrimidine + H(+) = thiamine phosphate + diphosphate. It functions in the pathway cofactor biosynthesis; thiamine diphosphate biosynthesis; thiamine phosphate from 4-amino-2-methyl-5-diphosphomethylpyrimidine and 4-methyl-5-(2-phosphoethyl)-thiazole: step 1/1. In terms of biological role, condenses 4-methyl-5-(beta-hydroxyethyl)thiazole monophosphate (THZ-P) and 2-methyl-4-amino-5-hydroxymethyl pyrimidine pyrophosphate (HMP-PP) to form thiamine monophosphate (TMP). The polypeptide is Thiamine-phosphate synthase (Mycolicibacterium gilvum (strain PYR-GCK) (Mycobacterium gilvum (strain PYR-GCK))).